A 177-amino-acid chain; its full sequence is MLEKLIERVLFATRWLLAPLCIAMSLVLVVLGYVFMKELWHMLSHLDTISETDLVLSALGLVDLLFMAGLVLMVLLASYESFVSKLDKVDASEITWLKHTDFNALKLKVSLSIVAISAIFLLKRYMSLEDVLSSIPKDTPLSHNPIFWQVVIHLVFVCSALLTAVTNNIAFSQKERH.

The next 3 membrane-spanning stretches (helical) occupy residues 15–35 (WLLA…GYVF), 54–74 (LVLS…VLMV), and 145–165 (PIFW…LTAV).

Belongs to the UPF0114 family.

It localises to the cell membrane. The polypeptide is UPF0114 protein jhp_0175 (Helicobacter pylori (strain J99 / ATCC 700824) (Campylobacter pylori J99)).